Reading from the N-terminus, the 650-residue chain is ATP-binding cassette sub-family G member 3 (650 aa).

Residues 1 to 387 (MASNNDPTVI…KNFKGFPWVT (387 aa)) are Cytoplasmic-facing. In terms of domain architecture, ABC transporter spans 37 to 279 (LSFHNISYQE…FRSAGYNYES (243 aa)). The 264-residue stretch at 381–644 (KGFPWVTVIQ…TITYVQLLQV (264 aa)) folds into the ABC transmembrane type-2 domain. Residues 388 to 408 (VIQAIITVILATAVGTAFRVL) traverse the membrane as a helical segment. Residues 409-420 (KNDCIEVQMRAG) are Extracellular-facing. The chain crosses the membrane as a helical span at residues 421 to 441 (LLYLLTIFQCITSVSAGELFV). Residues 442 to 469 (IDRVRFLHEHTSGYYRVSSYFFGKLLAE) are Cytoplasmic-facing. Residues 470 to 490 (LIPRRLLPSTVFSLITYVIAG) form a helical membrane-spanning segment. At 491–498 (VKMSMKCF) the chain is on the extracellular side. Residues 499–519 (FTMICTIMVLAYSASSLPLSI) form a helical membrane-spanning segment. Residues 520–527 (GAGENAVA) lie on the Cytoplasmic side of the membrane. A helical membrane pass occupies residues 528–548 (VPTLLVTIYFVFMLFFSGLSL). At 549–623 (YSGSFLPKLS…LSSWGFWENH (75 aa)) the chain is on the extracellular side. A helical transmembrane segment spans residues 624-644 (LALVCTMIILLTITYVQLLQV). The Cytoplasmic portion of the chain corresponds to 645–648 (KNIR).

Belongs to the ABC transporter superfamily. ABCG family. Eye pigment precursor importer (TC 3.A.1.204) subfamily. In terms of assembly, may dimerize with another subunit to form a functional transporter. In terms of tissue distribution, highest levels of expression in thymus and spleen. Detected in lung and small intestine.

The protein resides in the membrane. The chain is ATP-binding cassette sub-family G member 3 (Abcg3) from Mus musculus (Mouse).